We begin with the raw amino-acid sequence, 107 residues long: Large ribosomal subunit protein uL24 (107 aa).

The protein belongs to the universal ribosomal protein uL24 family. Part of the 50S ribosomal subunit.

In terms of biological role, one of two assembly initiator proteins, it binds directly to the 5'-end of the 23S rRNA, where it nucleates assembly of the 50S subunit. Functionally, one of the proteins that surrounds the polypeptide exit tunnel on the outside of the subunit. In Pelotomaculum thermopropionicum (strain DSM 13744 / JCM 10971 / SI), this protein is Large ribosomal subunit protein uL24.